A 342-amino-acid chain; its full sequence is uncharacterized protein (342 aa).

A Nudix hydrolase domain is found at 155–309 (TYGIHINGYV…KPNCALVMVD (155 aa)).

This is an uncharacterized protein from Saccharomyces cerevisiae (strain ATCC 204508 / S288c) (Baker's yeast).